A 624-amino-acid chain; its full sequence is Double-stranded RNA-binding protein Staufen homolog 2 (624 aa).

5 DRBM domains span residues 55 to 122 (STSI…NGLA), 142 to 228 (QRAN…SEIS), 254 to 321 (MKSF…PEYG), 354 to 422 (RRRE…IADQ), and 540 to 604 (LTCL…EKAD). Positions 197–223 (LRNEPIPERSSLNGEANRGPEEDKDAN) are disordered. The segment covering 214 to 223 (RGPEEDKDAN) has biased composition (basic and acidic residues). 2 disordered regions span residues 401-428 (EKTG…TPKG) and 592-624 (PFEQ…KAVV). Positions 415–426 (QNSGIADQTSTP) are enriched in polar residues. Residues 596-605 (AKLRGEKADN) show a composition bias toward basic and acidic residues.

In terms of biological role, RNA-binding protein required for the microtubule-dependent transport of RNAs within polarized cell types. In Xenopus tropicalis (Western clawed frog), this protein is Double-stranded RNA-binding protein Staufen homolog 2 (stau2).